A 202-amino-acid polypeptide reads, in one-letter code: Complement component C8 gamma chain (202 aa).

Positions 1 to 20 are cleaved as a signal peptide; sequence MLPPGTATLLTLLLAAGSLG. Gln-21 is subject to Pyrrolidone carboxylic acid. Residues Cys-96 and Cys-188 are joined by a disulfide bond.

It belongs to the calycin superfamily. Lipocalin family. As to quaternary structure, heterotrimer of 3 chains: alpha (C8A), beta (C8B) and gamma (C8G); the alpha and gamma chains are disulfide bonded. Component of the membrane attack complex (MAC), composed of complement C5b, C6, C7, C8A, C8B, C8G and multiple copies of the pore-forming subunit C9.

The protein localises to the secreted. It is found in the target cell membrane. Its activity is regulated as follows. Membrane attack complex (MAC) assembly is inhibited by CD59, thereby protecting self-cells from damage during complement activation. MAC assembly is also inhibited by clusterin (CLU) chaperones that inhibit polymerization of C9. In terms of biological role, component of the membrane attack complex (MAC), a multiprotein complex activated by the complement cascade, which inserts into a target cell membrane and forms a pore, leading to target cell membrane rupture and cell lysis. The MAC is initiated by proteolytic cleavage of C5 into complement C5b in response to the classical, alternative, lectin and GZMK complement pathways. The complement pathways consist in a cascade of proteins that leads to phagocytosis and breakdown of pathogens and signaling that strengthens the adaptive immune system. C8G, together with C8A and C8B, inserts into the target membrane, but does not form pores by itself. During MAC assembly, associates with C5b, C6 and C7 to form the C5b8 intermediate complex that inserts into the target membrane and traverses the bilayer increasing membrane rigidity. This chain is Complement component C8 gamma chain, found in Homo sapiens (Human).